The following is a 222-amino-acid chain: Uracil-DNA glycosylase (222 aa).

The Proton acceptor role is filled by Asp-61.

The protein belongs to the uracil-DNA glycosylase (UDG) superfamily. UNG family.

It localises to the cytoplasm. It carries out the reaction Hydrolyzes single-stranded DNA or mismatched double-stranded DNA and polynucleotides, releasing free uracil.. Excises uracil residues from the DNA which can arise as a result of misincorporation of dUMP residues by DNA polymerase or due to deamination of cytosine. The chain is Uracil-DNA glycosylase from Aeromonas hydrophila subsp. hydrophila (strain ATCC 7966 / DSM 30187 / BCRC 13018 / CCUG 14551 / JCM 1027 / KCTC 2358 / NCIMB 9240 / NCTC 8049).